Here is a 969-residue protein sequence, read N- to C-terminus: MSSNTVAQFATELKMPANVLLEQLRAAGVDLKSVDDAVTDSDKAKLLESLRRAHGATEGKKITLTRRQTSEIRQADATGRSRTIQVEVRKKRVFVKRDPAEPVRAEPAVETAAKPVEPPVAEAPAEPVAAPAAEPQPEQPAQAEAQPEPTPAAQAEPEPQPEPQPEAAPAQAVAEPVEPAKNVSVTETEAEQARPEPVVHAQTELTSQTPAPVAQPSAPAESPKSAKAEPAAAPKTTAKPGEIRRAAAPAAPDRAREEARRAAEAEAAALREMLSRPRKVLRAPEPEPQAGALSGTLHKPAGKPATTAAPKKDAKPGAPGAKKTIKTAEVSSTWSDDSARKKPADNKPAVTTRDGWRAGGKGGRGGRNSRNQHQDRRHEQVQQEFIAREIHVPETISVADLAHKMSVKAAEVIKQLMKLGQMVTINQVLDQETAMIVVQEFGHTAIAAKLDDPEAFLDETAAVTEAEAEPRAPVVTVMGHVDHGKTSLLDYIRRAKVASGEAGGITQHIGAYHVETGRGVVTFLDTPGHEAFTAMRARGAKATDIVILVVAADDGVMPQTREAIHHAKAGGVPLVVAVNKIDKPEANPERVKQELVAEEVVPEEYGGDVPFVPVSAKTGAGIDDLLENVLLQAEILELKAPIEVPAKGLVIEARLDKGRGPVATILVQSGTLKRGDVVLAGASFGRVRAMLDENGKQIQTAGPSIPVEIQGLTEVPAAGDELMVLSDERKAREIALFRQGKFRDVKLARQQAAKLESMFDNLGEGTQTLALIVKTDVQGSQEALVSSLTKLSTDEVRVQVVHAAVGGISESDVNLAIASNAVVIGFNVRAEQSAKKLAETNGIDLRYYNIIYDAVDEVKAAMSGMLAPEKREEVIGLVEVREVYTISRIGTVAGCMVLDGVVRRDSQVRLLRNNVVQWTGHLDSLRRFKDDVKEVKSGFDCGLTLRGNNDLQLGDQLEVFEIKEIARTL.

The tract at residues 96–377 (KRDPAEPVRA…NSRNQHQDRR (282 aa)) is disordered. 3 stretches are compositionally biased toward low complexity: residues 105 to 157 (AEPA…QAEP), 167 to 181 (AAPA…EPAK), and 216 to 252 (PSAP…PAAP). Residues 253–264 (DRAREEARRAAE) show a composition bias toward basic and acidic residues. The segment covering 357–366 (RAGGKGGRGG) has biased composition (gly residues). In terms of domain architecture, tr-type G spans 470–637 (PRAPVVTVMG…NVLLQAEILE (168 aa)). The segment at 479–486 (GHVDHGKT) is G1. A GTP-binding site is contributed by 479-486 (GHVDHGKT). The tract at residues 504-508 (GITQH) is G2. Residues 525 to 528 (DTPG) form a G3 region. GTP-binding positions include 525–529 (DTPGH) and 579–582 (NKID). The G4 stretch occupies residues 579–582 (NKID). The G5 stretch occupies residues 615 to 617 (SAK).

This sequence belongs to the TRAFAC class translation factor GTPase superfamily. Classic translation factor GTPase family. IF-2 subfamily.

It localises to the cytoplasm. In terms of biological role, one of the essential components for the initiation of protein synthesis. Protects formylmethionyl-tRNA from spontaneous hydrolysis and promotes its binding to the 30S ribosomal subunits. Also involved in the hydrolysis of GTP during the formation of the 70S ribosomal complex. The sequence is that of Translation initiation factor IF-2 from Bordetella parapertussis (strain 12822 / ATCC BAA-587 / NCTC 13253).